Here is a 215-residue protein sequence, read N- to C-terminus: MKTILVTGFDPFGGEIVNPAWESVKELGKIESDLYKVELRQIPTVFEKSIEHLYAAIEETKPDIVLCIGQAGGRGDIAVERVAINVNDARIPDNEGNQPIDTPIRENGPTGYWSTLPIKAIVHELKQKGIPASISQTAGTYVCNHLFYGLMHYLAEKKASVRGGFIHIPYLPEQAARQADQPSMALETIVKGLQLAIETTISHDRDIVMEGGQIS.

Residues Glu-80, Cys-143, and His-167 contribute to the active site.

Belongs to the peptidase C15 family. As to quaternary structure, homotetramer.

It is found in the cytoplasm. The enzyme catalyses Release of an N-terminal pyroglutamyl group from a polypeptide, the second amino acid generally not being Pro.. Functionally, removes 5-oxoproline from various penultimate amino acid residues except L-proline. In Brevibacillus brevis (strain 47 / JCM 6285 / NBRC 100599), this protein is Pyrrolidone-carboxylate peptidase.